The chain runs to 593 residues: Prospero homeobox protein 2 (593 aa).

6 disordered regions span residues 24 to 48 (CMDQ…QLPS), 79 to 130 (SPSS…GGTR), 153 to 199 (TEPR…KDLC), 260 to 284 (QERS…SAYK), 298 to 333 (PQAG…QSPL), and 356 to 388 (GRGP…PWGL). Over residues 87 to 99 (RARESLRCPEKGR) the composition is skewed to basic and acidic residues. Residues 167–181 (PRSSPRARPRNSCSS) are compositionally biased toward low complexity. Residues 363-380 (WSGSPPQDAAFQSHTSPE) are compositionally biased toward polar residues. One can recognise a Prospero-type homeo domain in the interval 433 to 491 (QEGLSPGHLKKAKLMFFFTRYPSSSLLKAYFPDVQFNRCITSQMIKWFSNFREFYYIQM). Residues 433–591 (QEGLSPGHLK…KSPSFLPGLF (159 aa)) are homeo-Prospero. The 100-residue stretch at 492-591 (EKYARQALSD…KSPSFLPGLF (100 aa)) folds into the Prospero domain.

This sequence belongs to the Prospero homeodomain family. In terms of tissue distribution, expressed in testis.

The protein resides in the nucleus. Functionally, transcription regulator. Does not seem to be essential for embryonic development and postnatal survival. The protein is Prospero homeobox protein 2 (Prox2) of Mus musculus (Mouse).